The chain runs to 490 residues: Aspartyl/glutamyl-tRNA(Asn/Gln) amidotransferase subunit B (490 aa).

This sequence belongs to the GatB/GatE family. GatB subfamily. Heterotrimer of A, B and C subunits.

It catalyses the reaction L-glutamyl-tRNA(Gln) + L-glutamine + ATP + H2O = L-glutaminyl-tRNA(Gln) + L-glutamate + ADP + phosphate + H(+). The enzyme catalyses L-aspartyl-tRNA(Asn) + L-glutamine + ATP + H2O = L-asparaginyl-tRNA(Asn) + L-glutamate + ADP + phosphate + 2 H(+). In terms of biological role, allows the formation of correctly charged Asn-tRNA(Asn) or Gln-tRNA(Gln) through the transamidation of misacylated Asp-tRNA(Asn) or Glu-tRNA(Gln) in organisms which lack either or both of asparaginyl-tRNA or glutaminyl-tRNA synthetases. The reaction takes place in the presence of glutamine and ATP through an activated phospho-Asp-tRNA(Asn) or phospho-Glu-tRNA(Gln). This chain is Aspartyl/glutamyl-tRNA(Asn/Gln) amidotransferase subunit B, found in Symbiobacterium thermophilum (strain DSM 24528 / JCM 14929 / IAM 14863 / T).